The sequence spans 265 residues: Thiazole synthase (265 aa).

Lys107 serves as the catalytic Schiff-base intermediate with DXP. 1-deoxy-D-xylulose 5-phosphate is bound by residues Gly168, 194-195 (AG), and 216-217 (NT).

Belongs to the ThiG family. In terms of assembly, homotetramer. Forms heterodimers with either ThiH or ThiS.

The protein localises to the cytoplasm. It carries out the reaction [ThiS sulfur-carrier protein]-C-terminal-Gly-aminoethanethioate + 2-iminoacetate + 1-deoxy-D-xylulose 5-phosphate = [ThiS sulfur-carrier protein]-C-terminal Gly-Gly + 2-[(2R,5Z)-2-carboxy-4-methylthiazol-5(2H)-ylidene]ethyl phosphate + 2 H2O + H(+). It participates in cofactor biosynthesis; thiamine diphosphate biosynthesis. In terms of biological role, catalyzes the rearrangement of 1-deoxy-D-xylulose 5-phosphate (DXP) to produce the thiazole phosphate moiety of thiamine. Sulfur is provided by the thiocarboxylate moiety of the carrier protein ThiS. In vitro, sulfur can be provided by H(2)S. In Pseudomonas aeruginosa (strain LESB58), this protein is Thiazole synthase.